Consider the following 205-residue polypeptide: Non-specific lipid transfer protein GPI-anchored 13 (205 aa).

An N-terminal signal peptide occupies residues 1-24 (MESRKIKVMATAIALIMVAMVVDA). 4 cysteine pairs are disulfide-bonded: Cys-36/Cys-77, Cys-46/Cys-61, Cys-62/Cys-104, and Cys-75/Cys-113. N-linked (GlcNAc...) asparagine glycosylation is found at Asn-93, Asn-137, and Asn-165. A disordered region spans residues 141–176 (SASAPTGSASEPTSMSSTPGSSAGNNSGRTTSVPGT). Asn-177 is lipidated: GPI-anchor amidated asparagine. A propeptide spans 178–205 (HAQSFSKQWLGLEVVAHFFVIFYIFILV) (removed in mature form).

The protein belongs to the plant LTP family. In terms of tissue distribution, expressed preferentially in expanding leaves and sepals, restricted to the distal side. Expressed at low levels in roots and stems.

The protein resides in the cell membrane. Probable lipid transfer protein. This is Non-specific lipid transfer protein GPI-anchored 13 from Arabidopsis thaliana (Mouse-ear cress).